The primary structure comprises 301 residues: Sulfate adenylyltransferase subunit 2 (301 aa).

The disordered stretch occupies residues 282–301 (RLIDRDEAGSMEKKKREGYF).

This sequence belongs to the PAPS reductase family. CysD subfamily. Heterodimer composed of CysD, the smaller subunit, and CysN.

It carries out the reaction sulfate + ATP + H(+) = adenosine 5'-phosphosulfate + diphosphate. It functions in the pathway sulfur metabolism; hydrogen sulfide biosynthesis; sulfite from sulfate: step 1/3. In terms of biological role, with CysN forms the ATP sulfurylase (ATPS) that catalyzes the adenylation of sulfate producing adenosine 5'-phosphosulfate (APS) and diphosphate, the first enzymatic step in sulfur assimilation pathway. APS synthesis involves the formation of a high-energy phosphoric-sulfuric acid anhydride bond driven by GTP hydrolysis by CysN coupled to ATP hydrolysis by CysD. This Chelativorans sp. (strain BNC1) protein is Sulfate adenylyltransferase subunit 2.